Here is a 125-residue protein sequence, read N- to C-terminus: Cu-Zn superoxide dismutase-like protein OPG175 (125 aa).

Residues Cys52 and Cys102 are joined by a disulfide bond.

The protein belongs to the Cu-Zn superoxide dismutase family.

It is found in the virion. It localises to the host cytoplasm. Functionally, superoxide dismutase-like protein with no enzymatic activity. This Cowpox virus (strain Brighton Red) (CPV) protein is Cu-Zn superoxide dismutase-like protein OPG175 (OPG175).